A 317-amino-acid polypeptide reads, in one-letter code: Spermidine synthase 2 (317 aa).

The PABS domain occupies 27 to 264; that stretch reads PGWFSEISPL…GMIGFMLCST (238 aa). Position 58 (glutamine 58) interacts with S-adenosyl 3-(methylsulfanyl)propylamine. Tyrosine 88 lines the putrescine pocket. S-adenosyl 3-(methylsulfanyl)propylamine-binding positions include glutamine 89, aspartate 113, glutamate 133, 164–165, and aspartate 183; that span reads DG. Catalysis depends on aspartate 183, which acts as the Proton acceptor. Residues 183-186 and tyrosine 252 contribute to the putrescine site; that span reads DSSD.

Belongs to the spermidine/spermine synthase family.

It catalyses the reaction S-adenosyl 3-(methylsulfanyl)propylamine + putrescine = S-methyl-5'-thioadenosine + spermidine + H(+). It participates in amine and polyamine biosynthesis; spermidine biosynthesis; spermidine from putrescine: step 1/1. This Datura stramonium (Jimsonweed) protein is Spermidine synthase 2.